The chain runs to 415 residues: U-box domain-containing protein 29 (415 aa).

The U-box domain maps to Thr-11–Arg-85. ARM repeat units follow at residues Lys-221–Lys-263 and Lys-265–Ser-307.

Binds to SD129 and SD25.

The catalysed reaction is S-ubiquitinyl-[E2 ubiquitin-conjugating enzyme]-L-cysteine + [acceptor protein]-L-lysine = [E2 ubiquitin-conjugating enzyme]-L-cysteine + N(6)-ubiquitinyl-[acceptor protein]-L-lysine.. It functions in the pathway protein modification; protein ubiquitination. Functions as an E3 ubiquitin ligase. The protein is U-box domain-containing protein 29 (PUB29) of Arabidopsis thaliana (Mouse-ear cress).